The primary structure comprises 134 residues: uncharacterized protein (134 aa).

3 helical membrane-spanning segments follow: residues 8–28 (FTSLMLTCANIMLQMYFTVMY), 54–74 (GFQAFSALLLLLSGAWITFLL), and 113–133 (LACFAVFFFVYLFLFVSRLVD).

This sequence belongs to the cornichon family.

The protein localises to the endoplasmic reticulum membrane. This is an uncharacterized protein from Schizosaccharomyces pombe (strain 972 / ATCC 24843) (Fission yeast).